The chain runs to 391 residues: Probable protein phosphatase 2C 32 (391 aa).

Positions 1–53 are disordered; sequence MSCTVAIPSSPVFSPSRRPLSCKAASASASPESVSVAASSPAQAAPPAGSPLR. Residues 8–51 are compositionally biased toward low complexity; the sequence is PSSPVFSPSRRPLSCKAASASASPESVSVAASSPAQAAPPAGSP. A helical membrane pass occupies residues 95-115; that stretch reads LVVPVCGGAAAAAAAAAVAAV. The region spanning 129–386 is the PPM-type phosphatase domain; it reads EFAVYCRRGK…DDISIVIIQL (258 aa). 4 residues coordinate Mn(2+): D168, G169, D332, and D377.

Belongs to the PP2C family. The cofactor is Mg(2+). Mn(2+) is required as a cofactor.

It localises to the membrane. The catalysed reaction is O-phospho-L-seryl-[protein] + H2O = L-seryl-[protein] + phosphate. The enzyme catalyses O-phospho-L-threonyl-[protein] + H2O = L-threonyl-[protein] + phosphate. This Oryza sativa subsp. japonica (Rice) protein is Probable protein phosphatase 2C 32.